The primary structure comprises 225 residues: Potassium-transporting ATPase KdpC subunit (225 aa).

The helical transmembrane segment at 18–38 (ALLVLTVVTGIVYPLVVTGVA) threads the bilayer. A disordered region spans residues 134–161 (NSVPGHPVRPEDVPADAVTSSGSGLDPD).

Belongs to the KdpC family. As to quaternary structure, the system is composed of three essential subunits: KdpA, KdpB and KdpC.

It localises to the cell membrane. Its function is as follows. Part of the high-affinity ATP-driven potassium transport (or Kdp) system, which catalyzes the hydrolysis of ATP coupled with the electrogenic transport of potassium into the cytoplasm. This subunit acts as a catalytic chaperone that increases the ATP-binding affinity of the ATP-hydrolyzing subunit KdpB by the formation of a transient KdpB/KdpC/ATP ternary complex. The chain is Potassium-transporting ATPase KdpC subunit from Streptomyces coelicolor (strain ATCC BAA-471 / A3(2) / M145).